The chain runs to 387 residues: 3-ketoacyl-CoA thiolase (387 aa).

Cysteine 91 (acyl-thioester intermediate) is an active-site residue. Active-site proton acceptor residues include histidine 343 and cysteine 373.

Belongs to the thiolase-like superfamily. Thiolase family. In terms of assembly, heterotetramer of two alpha chains (FadB) and two beta chains (FadA).

It is found in the cytoplasm. The enzyme catalyses an acyl-CoA + acetyl-CoA = a 3-oxoacyl-CoA + CoA. Its pathway is lipid metabolism; fatty acid beta-oxidation. Its function is as follows. Catalyzes the final step of fatty acid oxidation in which acetyl-CoA is released and the CoA ester of a fatty acid two carbons shorter is formed. In Erwinia tasmaniensis (strain DSM 17950 / CFBP 7177 / CIP 109463 / NCPPB 4357 / Et1/99), this protein is 3-ketoacyl-CoA thiolase.